Reading from the N-terminus, the 498-residue chain is ATP synthase subunit beta, chloroplastic (498 aa).

Position 6 is a phosphothreonine (T6). Phosphoserine is present on S13. ATP is bound at residue 172 to 179 (GGAGVGKT).

It belongs to the ATPase alpha/beta chains family. F-type ATPases have 2 components, CF(1) - the catalytic core - and CF(0) - the membrane proton channel. CF(1) has five subunits: alpha(3), beta(3), gamma(1), delta(1), epsilon(1). CF(0) has four main subunits: a(1), b(1), b'(1) and c(9-12).

The protein localises to the plastid. Its subcellular location is the chloroplast thylakoid membrane. It catalyses the reaction ATP + H2O + 4 H(+)(in) = ADP + phosphate + 5 H(+)(out). Functionally, produces ATP from ADP in the presence of a proton gradient across the membrane. The catalytic sites are hosted primarily by the beta subunits. The sequence is that of ATP synthase subunit beta, chloroplastic from Brassica napus (Rape).